We begin with the raw amino-acid sequence, 880 residues long: Tyrosine-protein kinase receptor TYRO3 (880 aa).

The N-terminal stretch at 1 to 28 is a signal peptide; the sequence is MVYPGPPGLIAGLLLAALSLSCVDGAKA. 2 Ig-like C2-type domains span residues 29–114 and 125–206; these read LGFV…KSVS and PYFT…AIVE. The Extracellular portion of the chain corresponds to 29–414; it reads LGFVGHGYNL…QRHPHTRMSW (386 aa). 2 N-linked (GlcNAc...) asparagine glycosylation sites follow: Asn37 and Asn49. Cys50 and Cys103 are joined by a disulfide. The N-linked (GlcNAc...) asparagine glycan is linked to Asn143. Cys146 and Cys189 are joined by a disulfide. Fibronectin type-III domains lie at 213–306 and 311–401; these read PPFN…TKET and LPQN…SKEE. Asn216, Asn279, Asn351, and Asn365 each carry an N-linked (GlcNAc...) asparagine glycan. The chain crosses the membrane as a helical span at residues 415–435; the sequence is VPMVLGILTALVTVVAMTLIF. Topologically, residues 436 to 880 are cytoplasmic; sequence LRKGRKETRF…MQEEQVVITL (445 aa). The 272-residue stretch at 503-774 folds into the Protein kinase domain; the sequence is FTLGRTLGKG…VDLKQRLEAI (272 aa). Residues 509 to 517 and Lys535 each bind ATP; that span reads LGKGEFGSV. The Proton acceptor role is filled by Asp640. Tyr671 bears the Phosphotyrosine; by autocatalysis mark. Positions 846 to 880 are disordered; the sequence is EWSSSAQNGEARGLLHEEEEEEEEEMQEEQVVITL. The span at 862–873 shows a compositional bias: acidic residues; that stretch reads EEEEEEEEEMQE.

This sequence belongs to the protein kinase superfamily. Tyr protein kinase family. AXL/UFO subfamily. Tyrosine phosphorylated upon receptor stimulation. As to expression, detected in brain, spinal cord, intestine, lung, stomach, ovary, testis, skin and eye.

The protein resides in the cell membrane. The enzyme catalyses L-tyrosyl-[protein] + ATP = O-phospho-L-tyrosyl-[protein] + ADP + H(+). Its function is as follows. May be involved in cell adhesion processes, particularly in the central nervous system. In Xenopus laevis (African clawed frog), this protein is Tyrosine-protein kinase receptor TYRO3 (tyro3).